The primary structure comprises 227 residues: Zinc finger protein 511 (227 aa).

C2H2-type zinc fingers lie at residues 80-105, 107-130, and 144-169; these read FTCQ…HMMH, NTCS…LEWH, and YQCL…VRLH. Residues 180–204 form a disordered region; that stretch reads PKTNRGPAMPAAADAATRAPTDDSD. Positions 186 to 198 are enriched in low complexity; the sequence is PAMPAAADAATRA.

Belongs to the krueppel C2H2-type zinc-finger protein family.

It localises to the nucleus. Functionally, may be involved in transcriptional regulation. This is Zinc finger protein 511 (Znf511) from Mus musculus (Mouse).